A 218-amino-acid polypeptide reads, in one-letter code: Small ribosomal subunit protein uS5 (218 aa).

Residues 1–49 are disordered; the sequence is MPGRQRRDGGSGPAGQNGPNTGDNRGGGDRRGGGRDDRRGGQSAEKSNH. The segment covering 26 to 49 has biased composition (basic and acidic residues); sequence GGGDRRGGGRDDRRGGQSAEKSNH. In terms of domain architecture, S5 DRBM spans 49-112; the sequence is HIERVVTINR…EEARKSFFRV (64 aa).

It belongs to the universal ribosomal protein uS5 family. As to quaternary structure, part of the 30S ribosomal subunit. Contacts proteins S4 and S8.

Its function is as follows. With S4 and S12 plays an important role in translational accuracy. Functionally, located at the back of the 30S subunit body where it stabilizes the conformation of the head with respect to the body. This is Small ribosomal subunit protein uS5 from Rhodococcus jostii (strain RHA1).